A 217-amino-acid polypeptide reads, in one-letter code: Large ribosomal subunit protein uL1 (217 aa).

This sequence belongs to the universal ribosomal protein uL1 family. In terms of assembly, part of the 50S ribosomal subunit.

Functionally, binds directly to 23S rRNA. The L1 stalk is quite mobile in the ribosome, and is involved in E site tRNA release. Its function is as follows. Protein L1 is also a translational repressor protein, it controls the translation of the L11 operon by binding to its mRNA. In Anaplasma marginale (strain St. Maries), this protein is Large ribosomal subunit protein uL1.